Here is a 494-residue protein sequence, read N- to C-terminus: Cytochrome P450 2A4 (494 aa).

Residue Ser131 is modified to Phosphoserine. An N6-acetyllysine modification is found at Lys379. Cys439 serves as a coordination point for heme.

Belongs to the cytochrome P450 family. Heme is required as a cofactor. In terms of tissue distribution, kidney and lung. Expressed in liver, with a strong circadian rhythmicity. Circadian expression is regulated by DBP.

The protein resides in the endoplasmic reticulum membrane. It is found in the microsome membrane. It catalyses the reaction an organic molecule + reduced [NADPH--hemoprotein reductase] + O2 = an alcohol + oxidized [NADPH--hemoprotein reductase] + H2O + H(+). Functionally, highly active in the 15-alpha-hydroxylation of testosterone. Also active in the 15-alpha-hydroxylation of progesterone and androstenedione. Little or no activity on corticosterone, pregnenolone, dehydroepiandrosterone, estradiol or estriol. This chain is Cytochrome P450 2A4 (Cyp2a4), found in Mus musculus (Mouse).